The primary structure comprises 361 residues: MADTKGFSSIETPGYVGFANLPNQVHRKSVKKGFEFTLMVVGESGLGKSTLVNSLFLTDLYPERIIPDAIEKQKQTVKLEASTVEIEERGVKLRLTVVDTPGFGDAIDNSNSFGAILEYIDEQYERFLRDESGLNRRNIVDNRIHCCFYFISPFGHGLKPLDVEFMKKLHSKVNIVPVIAKADCLTKKEILRLKCRIMQEIESHGIKIYPLPDCDSDEDEDYKEQVKQLKEAVPFAVCGANTLLEVKGKKVRGRLYPWGVVEVENPDHCDFIKLRTMLITHMQDLQEVTQEVHYENYRSDRLAKGIKGKENGVKAERDSSSQVVSNSVLGEKDRILQEKEAELRRMQEMLAQMQARMQAQQ.

Positions 32–304 (KGFEFTLMVV…ENYRSDRLAK (273 aa)) constitute a Septin-type G domain. Residues 42 to 49 (GESGLGKS) are G1 motif. Residues 42 to 49 (GESGLGKS), Thr76, Gly102, 181 to 189 (KADCLTKKE), Gly239, and Arg254 each bind GTP. The interval 99 to 102 (DTPG) is G3 motif. A G4 motif region spans residues 180–183 (AKAD). At Ser319 the chain carries Phosphoserine.

Belongs to the TRAFAC class TrmE-Era-EngA-EngB-Septin-like GTPase superfamily. Septin GTPase family. As to quaternary structure, likely part of a multicomponent septin complex that includes pnut. Interacts with pnut. Interacts with park. Post-translationally, ubiquitinated by park, leading to its degradation by the proteasome. Accumulates at the leading edge of the cleavage furrow in dividing cells and cellularizing embryos (at protein level). Also accumulates at the leading edge of the embryo epithelium during dorsal closure, in the embryonic neurons, and at the baso-lateral surfaces of ovarian follicle cells (at protein level).

The protein resides in the cytoplasm. Its function is as follows. Involved in cytokinesis. May be involved in p53-dependent apoptosis. The sequence is that of Septin-1 from Drosophila melanogaster (Fruit fly).